We begin with the raw amino-acid sequence, 1092 residues long: DNA polymerase II large subunit (1092 aa).

This sequence belongs to the archaeal DNA polymerase II family. In terms of assembly, heterodimer of a large subunit and a small subunit.

It carries out the reaction DNA(n) + a 2'-deoxyribonucleoside 5'-triphosphate = DNA(n+1) + diphosphate. The catalysed reaction is Exonucleolytic cleavage in the 3'- to 5'-direction to yield nucleoside 5'-phosphates.. In terms of biological role, possesses two activities: a DNA synthesis (polymerase) and an exonucleolytic activity that degrades single-stranded DNA in the 3'- to 5'-direction. Has a template-primer preference which is characteristic of a replicative DNA polymerase. The polypeptide is DNA polymerase II large subunit (polC) (Methanothermobacter thermautotrophicus (strain ATCC 29096 / DSM 1053 / JCM 10044 / NBRC 100330 / Delta H) (Methanobacterium thermoautotrophicum)).